A 218-amino-acid chain; its full sequence is Probable WRKY transcription factor 12 (218 aa).

A compositionally biased stretch (low complexity) spans 49–63 (SSLSSPSFPIHNSSS). Disordered regions lie at residues 49-120 (SSLS…DMKN) and 199-218 (HNHI…LSSF). Polar residues predominate over residues 64–77 (TTTTHAPLGFSNNL). The segment covering 105-116 (SNSWWRSNSGSG) has biased composition (low complexity). The WRKY DNA-binding region spans 139-204 (SDVDVLDDGY…YEGRHNHIPS (66 aa)).

It belongs to the WRKY group II-c family.

The protein localises to the nucleus. Transcription factor. Interacts specifically with the W box (5'-(T)TGAC[CT]-3'), a frequently occurring elicitor-responsive cis-acting element. In Arabidopsis thaliana (Mouse-ear cress), this protein is Probable WRKY transcription factor 12 (WRKY12).